We begin with the raw amino-acid sequence, 281 residues long: 2,3,4,5-tetrahydropyridine-2,6-dicarboxylate N-succinyltransferase (281 aa).

Substrate is bound by residues arginine 108 and aspartate 145.

Belongs to the transferase hexapeptide repeat family. In terms of assembly, homotrimer.

It is found in the cytoplasm. The catalysed reaction is (S)-2,3,4,5-tetrahydrodipicolinate + succinyl-CoA + H2O = (S)-2-succinylamino-6-oxoheptanedioate + CoA. Its pathway is amino-acid biosynthesis; L-lysine biosynthesis via DAP pathway; LL-2,6-diaminopimelate from (S)-tetrahydrodipicolinate (succinylase route): step 1/3. The chain is 2,3,4,5-tetrahydropyridine-2,6-dicarboxylate N-succinyltransferase from Rhodopseudomonas palustris (strain ATCC BAA-98 / CGA009).